The primary structure comprises 185 residues: MVILMDKRFIELIKKGWKLKNEENKATYIDEVFLGAIITTLTDNGYVLMDIASNGNFHYFMFEHLESWDRIKIVAEVLPHSLTDVKVIGARMFIEFSYGVMIKGIPPSLFGLGLKGYLSQMLSNIGSIRYEYDGYYTFVNCATYLLINDYIDFDTLTIDWEKLNNDINAIISSLAKYLEIHKKVE.

This is an uncharacterized protein from Methanocaldococcus jannaschii (strain ATCC 43067 / DSM 2661 / JAL-1 / JCM 10045 / NBRC 100440) (Methanococcus jannaschii).